The following is a 152-amino-acid chain: Transcriptional repressor NrdR (152 aa).

Positions 1–21 (MRCPFCGNGDTQVKDSRPTED) are disordered. A zinc finger spans residues 3-34 (CPFCGNGDTQVKDSRPTEDSAAIRRRRFCPAC). The span at 12–21 (QVKDSRPTED) shows a compositional bias: basic and acidic residues. The region spanning 49-139 (LVIVKKDGQR…VYRNFREAKD (91 aa)) is the ATP-cone domain.

The protein belongs to the NrdR family. Zn(2+) is required as a cofactor.

Functionally, negatively regulates transcription of bacterial ribonucleotide reductase nrd genes and operons by binding to NrdR-boxes. In Rhodospirillum rubrum (strain ATCC 11170 / ATH 1.1.1 / DSM 467 / LMG 4362 / NCIMB 8255 / S1), this protein is Transcriptional repressor NrdR.